The sequence spans 96 residues: Cytochrome b (96 aa).

3 consecutive transmembrane segments (helical) span residues 1–15 (LCXIXQILTGLFLAM), 39–60 (WLIRNMHANGSSFFFICIYLHI), and 75–95 (WNVGVILLLLVMMTAFVGYVL). His-45 and His-59 together coordinate heme b.

It belongs to the cytochrome b family. As to quaternary structure, the cytochrome bc1 complex contains 3 respiratory subunits (MT-CYB, CYC1 and UQCRFS1), 2 core proteins (UQCRC1 and UQCRC2) and probably 6 low-molecular weight proteins. It depends on heme b as a cofactor.

It localises to the mitochondrion inner membrane. In terms of biological role, component of the ubiquinol-cytochrome c reductase complex (complex III or cytochrome b-c1 complex) that is part of the mitochondrial respiratory chain. The b-c1 complex mediates electron transfer from ubiquinol to cytochrome c. Contributes to the generation of a proton gradient across the mitochondrial membrane that is then used for ATP synthesis. This Geophagus steindachneri (Red hump earth eater) protein is Cytochrome b (mt-cyb).